Reading from the N-terminus, the 283-residue chain is Putative aquaporin NIP4-1 (283 aa).

Met1 bears the N-acetylmethionine mark. A run of 2 helical transmembrane segments spans residues 45–65 and 70–90; these read LIAE…VVVV and GGTI…MVMI. The NPA 1 motif lies at 102 to 104; that stretch reads NPA. Helical transmembrane passes span 122–142, 161–181, and 189–209; these read LYIG…RLMF, ALVA…GVAT, and LAGI…GPIS. The NPA 2 signature appears at 214–216; the sequence is NPA. Residues 231 to 251 traverse the membrane as a helical segment; it reads IWVYIVGPVLGVISGGFVYNL. Ser267 carries the post-translational modification Phosphoserine.

This sequence belongs to the MIP/aquaporin (TC 1.A.8) family. NIP (TC 1.A.8.12) subfamily.

It is found in the membrane. Potential aquaporin, which may facilitate the transport of water and small neutral solutes across cell membranes. This chain is Putative aquaporin NIP4-1 (NIP4-1), found in Arabidopsis thaliana (Mouse-ear cress).